Reading from the N-terminus, the 401-residue chain is F-box protein At1g69090 (401 aa).

Residues 1–23 form a disordered region; it reads MASPTLALAQSPPPKSPAVSVSQ. In terms of domain architecture, F-box spans 27–74; it reads HCWSKLPLDLMQLVFERLAFLDFERAKSVCSSWQFGSKQSKPNNQIPW.

This Arabidopsis thaliana (Mouse-ear cress) protein is F-box protein At1g69090.